The primary structure comprises 160 residues: Major strawberry allergen Fra a 1.08 (160 aa).

The protein belongs to the BetVI family. Post-translationally, phosphorylated in vivo. Phosphorylation prevents its activity as ribonuclease. Highly expressed in roots. Expressed a low levels in ripe red fruits.

Possesses ribonuclease activity in vitro. The sequence is that of Major strawberry allergen Fra a 1.08 from Fragaria ananassa (Strawberry).